We begin with the raw amino-acid sequence, 101 residues long: A-type ATP synthase subunit F (101 aa).

This sequence belongs to the V-ATPase F subunit family. Has multiple subunits, A(3), B(3), C, D, E, F, G, I and K(x); there may be a few other subunits as well.

Its subcellular location is the cell membrane. Functionally, component of the A-type ATP synthase that produces ATP from ADP in the presence of a proton gradient across the membrane. The chain is A-type ATP synthase subunit F from Methanosarcina mazei (strain ATCC BAA-159 / DSM 3647 / Goe1 / Go1 / JCM 11833 / OCM 88) (Methanosarcina frisia).